The sequence spans 164 residues: uncharacterized protein (164 aa).

Positions 1 to 77 (MGQKKTMGTE…PCSIRDAPFH (77 aa)) are disordered.

This is an uncharacterized protein from Homo sapiens (Human).